The primary structure comprises 158 residues: Cyclic pyranopterin monophosphate synthase (158 aa).

Residues 76–78 and 114–115 contribute to the substrate site; these read MCH and ME. The active site involves Asp-129.

This sequence belongs to the MoaC family. In terms of assembly, homohexamer; trimer of dimers.

It catalyses the reaction (8S)-3',8-cyclo-7,8-dihydroguanosine 5'-triphosphate = cyclic pyranopterin phosphate + diphosphate. It participates in cofactor biosynthesis; molybdopterin biosynthesis. Functionally, catalyzes the conversion of (8S)-3',8-cyclo-7,8-dihydroguanosine 5'-triphosphate to cyclic pyranopterin monophosphate (cPMP). The polypeptide is Cyclic pyranopterin monophosphate synthase (Clostridium perfringens (strain SM101 / Type A)).